The chain runs to 209 residues: Uracil phosphoribosyltransferase (209 aa).

5-phospho-alpha-D-ribose 1-diphosphate is bound by residues Arg-79, Arg-104, and 131–139; that span reads DPMLATGGS. Uracil-binding positions include Ile-194 and 199 to 201; that span reads GDA. Residue Asp-200 participates in 5-phospho-alpha-D-ribose 1-diphosphate binding.

It belongs to the UPRTase family. Mg(2+) is required as a cofactor.

The enzyme catalyses UMP + diphosphate = 5-phospho-alpha-D-ribose 1-diphosphate + uracil. It functions in the pathway pyrimidine metabolism; UMP biosynthesis via salvage pathway; UMP from uracil: step 1/1. Its activity is regulated as follows. Allosterically activated by GTP. Functionally, catalyzes the conversion of uracil and 5-phospho-alpha-D-ribose 1-diphosphate (PRPP) to UMP and diphosphate. This chain is Uracil phosphoribosyltransferase, found in Lactobacillus delbrueckii subsp. bulgaricus (strain ATCC 11842 / DSM 20081 / BCRC 10696 / JCM 1002 / NBRC 13953 / NCIMB 11778 / NCTC 12712 / WDCM 00102 / Lb 14).